Consider the following 171-residue polypeptide: NADH-quinone oxidoreductase subunit I 2 (171 aa).

4Fe-4S ferredoxin-type domains follow at residues 39 to 71 and 81 to 110; these read IVLT…LSKA and EHFR…LTPD. [4Fe-4S] cluster-binding residues include Cys51, Cys54, Cys57, Cys61, Cys90, Cys93, Cys96, and Cys100.

It belongs to the complex I 23 kDa subunit family. In terms of assembly, NDH-1 is composed of 14 different subunits. Subunits NuoA, H, J, K, L, M, N constitute the membrane sector of the complex. Requires [4Fe-4S] cluster as cofactor.

It is found in the cell inner membrane. The enzyme catalyses a quinone + NADH + 5 H(+)(in) = a quinol + NAD(+) + 4 H(+)(out). Functionally, NDH-1 shuttles electrons from NADH, via FMN and iron-sulfur (Fe-S) centers, to quinones in the respiratory chain. The immediate electron acceptor for the enzyme in this species is believed to be ubiquinone. Couples the redox reaction to proton translocation (for every two electrons transferred, four hydrogen ions are translocated across the cytoplasmic membrane), and thus conserves the redox energy in a proton gradient. The sequence is that of NADH-quinone oxidoreductase subunit I 2 from Rhodopseudomonas palustris (strain BisB18).